Reading from the N-terminus, the 54-residue chain is Preprotein translocase subunit SecG (54 aa).

The Cytoplasmic segment spans residues 1–31 (MSSGSNSGGLMSSAGLVRYFDSEDRDAIAID). A helical membrane pass occupies residues 32–53 (PKTVLAFCVLFGVFVQILSLTV). A54 is a topological domain (extracellular).

The protein belongs to the SEC61-beta family. In terms of assembly, component of the protein translocase complex. Heterotrimer consisting of alpha (SecY), beta (SecG) and gamma (SecE) subunits. Can form oligomers of the heterotrimer.

It localises to the cell membrane. Functionally, involved in protein export. The function of the beta subunit is unknown, but it may be involved in stabilization of the trimeric complex. The chain is Preprotein translocase subunit SecG from Halorubrum lacusprofundi (strain ATCC 49239 / DSM 5036 / JCM 8891 / ACAM 34).